The sequence spans 788 residues: Ribosome biogenesis protein ERB1 (788 aa).

Residues 1–91 (MGDLKGSRKR…SKPIREKSKP (91 aa)) form a disordered region. Positions 38-50 (LSDKSHDTEHSSD) are enriched in basic and acidic residues. The span at 51-78 (SEIELVDDLSSDDGEEYEDEFDSDEIPS) shows a compositional bias: acidic residues. A compositionally biased stretch (basic and acidic residues) spans 80 to 91 (IESKPIREKSKP). WD repeat units lie at residues 433–472 (GHSG…QIWS), 476–516 (SDEE…PEME), 613–651 (KGGG…LVKI), 654–699 (PGAR…RPYK), 703–742 (YHQK…DLLS), and 758–788 (TGEL…RLWT).

The protein belongs to the WD repeat BOP1/ERB1 family. As to quaternary structure, component of the NOP7 complex, composed of ERB1, NOP7 and YTM1. The complex is held together by ERB1, which interacts with NOP7 via its N-terminal domain and with YTM1 via a high-affinity interaction between the seven-bladed beta-propeller domains of the 2 proteins. The NOP7 complex associates with the 66S pre-ribosome.

It localises to the nucleus. The protein localises to the nucleolus. It is found in the nucleoplasm. Its function is as follows. Component of the NOP7 complex, which is required for maturation of the 25S and 5.8S ribosomal RNAs and formation of the 60S ribosome. This chain is Ribosome biogenesis protein ERB1, found in Ajellomyces capsulatus (strain NAm1 / WU24) (Darling's disease fungus).